A 177-amino-acid polypeptide reads, in one-letter code: Bifunctional protein PyrR (177 aa).

Residues serine 42–arginine 43, aspartate 104–threonine 112, and arginine 137 contribute to the substrate site. The short motif at valine 100–threonine 112 is the PRPP-binding element.

Belongs to the purine/pyrimidine phosphoribosyltransferase family. PyrR subfamily.

It carries out the reaction UMP + diphosphate = 5-phospho-alpha-D-ribose 1-diphosphate + uracil. Regulates the transcription of the pyrimidine nucleotide (pyr) operon in response to exogenous pyrimidines. Functionally, also displays a weak uracil phosphoribosyltransferase activity which is not physiologically significant. The chain is Bifunctional protein PyrR from Fusobacterium nucleatum subsp. nucleatum (strain ATCC 25586 / DSM 15643 / BCRC 10681 / CIP 101130 / JCM 8532 / KCTC 2640 / LMG 13131 / VPI 4355).